Consider the following 548-residue polypeptide: mRNA cleavage and polyadenylation factor CLP1 (548 aa).

ATP is bound by residues glutamate 19, lysine 60, and 123–128; that span reads SSGKTT. Residues 437-481 show a composition bias toward basic and acidic residues; it reads ESEVKEEVKEEKNEKDGEIKQDGEGEKKGEGKGEGEGEGEGKYGE. Residues 437–500 form a disordered region; the sequence is ESEVKEEVKE…DEEEVPFREE (64 aa). A compositionally biased stretch (acidic residues) spans 482 to 494; that stretch reads EEGEAEGEDDEEE.

It belongs to the Clp1 family. Clp1 subfamily. In terms of assembly, component of a pre-mRNA cleavage factor complex. Interacts directly with PCF11.

The protein resides in the nucleus. In terms of biological role, required for endonucleolytic cleavage during polyadenylation-dependent pre-mRNA 3'-end formation. This chain is mRNA cleavage and polyadenylation factor CLP1, found in Cryptococcus neoformans var. neoformans serotype D (strain B-3501A) (Filobasidiella neoformans).